Reading from the N-terminus, the 142-residue chain is MRHYETMFILKPTLVEEEIKSKIEFYKEVITKHNGVIETSLDMGMRNLAYEIKKHKRGYYYVMYFKAEPSMILELERLYRINEDVLRFIVIKYDSKKEVEAWHALVDRANKKPSHAKEKHEKTEHAHSHHTEEAGSKESHSE.

The tract at residues 110-142 (NKKPSHAKEKHEKTEHAHSHHTEEAGSKESHSE) is disordered.

It belongs to the bacterial ribosomal protein bS6 family.

Its function is as follows. Binds together with bS18 to 16S ribosomal RNA. The protein is Small ribosomal subunit protein bS6 of Helicobacter acinonychis (strain Sheeba).